A 424-amino-acid polypeptide reads, in one-letter code: D-inositol 3-phosphate glycosyltransferase (424 aa).

Residues H9, 20–25 (DAGGMN), K78, Y110, T134, and R154 each bind 1D-myo-inositol 3-phosphate. G23 lines the UDP-N-acetyl-alpha-D-glucosamine pocket. UDP-N-acetyl-alpha-D-glucosamine is bound by residues R231, K236, and R295. Mg(2+) is bound by residues Y304, Q305, and A307. Positions 317 and 325 each coordinate UDP-N-acetyl-alpha-D-glucosamine. A Mg(2+)-binding site is contributed by T331.

The protein belongs to the glycosyltransferase group 1 family. MshA subfamily. Homodimer.

The enzyme catalyses 1D-myo-inositol 3-phosphate + UDP-N-acetyl-alpha-D-glucosamine = 1D-myo-inositol 2-acetamido-2-deoxy-alpha-D-glucopyranoside 3-phosphate + UDP + H(+). Catalyzes the transfer of a N-acetyl-glucosamine moiety to 1D-myo-inositol 3-phosphate to produce 1D-myo-inositol 2-acetamido-2-deoxy-glucopyranoside 3-phosphate in the mycothiol biosynthesis pathway. The chain is D-inositol 3-phosphate glycosyltransferase from Corynebacterium urealyticum (strain ATCC 43042 / DSM 7109).